A 704-amino-acid chain; its full sequence is Penicillin-binding protein H (704 aa).

A helical membrane pass occupies residues 23 to 43 (FFLAVFVLFTALIFKLGVVQI). The disordered stretch occupies residues 197–223 (MNPNKSNSNGKNGALLDEKKNSSQRPK). Residues 200–209 (NKSNSNGKNG) show a composition bias toward low complexity. The span at 212 to 223 (LDEKKNSSQRPK) shows a compositional bias: basic and acidic residues. Serine 415 (acyl-ester intermediate) is an active-site residue.

This sequence belongs to the transpeptidase family.

The protein resides in the cell membrane. It catalyses the reaction Preferential cleavage: (Ac)2-L-Lys-D-Ala-|-D-Ala. Also transpeptidation of peptidyl-alanyl moieties that are N-acyl substituents of D-alanine.. It participates in cell wall biogenesis; peptidoglycan biosynthesis. In terms of biological role, involved in the polymerization of peptidoglycan. Plays a redundant role with PBP-2A (pbpA) in determining the rod shape of the cell during vegetative growth and spore outgrowth. This is Penicillin-binding protein H from Bacillus subtilis (strain 168).